The sequence spans 186 residues: dTTP/UTP pyrophosphatase (186 aa).

The active-site Proton acceptor is the Asp-67.

The protein belongs to the Maf family. YhdE subfamily. A divalent metal cation is required as a cofactor.

The protein resides in the cytoplasm. The enzyme catalyses dTTP + H2O = dTMP + diphosphate + H(+). The catalysed reaction is UTP + H2O = UMP + diphosphate + H(+). Nucleoside triphosphate pyrophosphatase that hydrolyzes dTTP and UTP. May have a dual role in cell division arrest and in preventing the incorporation of modified nucleotides into cellular nucleic acids. In Carboxydothermus hydrogenoformans (strain ATCC BAA-161 / DSM 6008 / Z-2901), this protein is dTTP/UTP pyrophosphatase.